A 354-amino-acid polypeptide reads, in one-letter code: Glycerol-1-phosphate dehydrogenase [NAD(P)+] (354 aa).

NAD(+) is bound by residues 102-106 (GRSID) and 124-127 (TAAS). Aspartate 129 is a substrate binding site. Serine 133 lines the NAD(+) pocket. Position 176 (aspartate 176) interacts with substrate. 2 residues coordinate Zn(2+): aspartate 176 and histidine 256. A substrate-binding site is contributed by histidine 260. Position 272 (histidine 272) interacts with Zn(2+).

The protein belongs to the glycerol-1-phosphate dehydrogenase family. The cofactor is Zn(2+).

Its subcellular location is the cytoplasm. It catalyses the reaction sn-glycerol 1-phosphate + NAD(+) = dihydroxyacetone phosphate + NADH + H(+). The catalysed reaction is sn-glycerol 1-phosphate + NADP(+) = dihydroxyacetone phosphate + NADPH + H(+). The protein operates within membrane lipid metabolism; glycerophospholipid metabolism. In terms of biological role, catalyzes the NAD(P)H-dependent reduction of dihydroxyacetonephosphate (DHAP or glycerone phosphate) to glycerol 1-phosphate (G1P). The G1P thus generated is used as the glycerophosphate backbone of phospholipids in the cellular membranes of Archaea. This Methanothrix thermoacetophila (strain DSM 6194 / JCM 14653 / NBRC 101360 / PT) (Methanosaeta thermophila) protein is Glycerol-1-phosphate dehydrogenase [NAD(P)+].